The following is a 129-amino-acid chain: MALEYPPHLRYVDTHEYIRVEDDIAVIGITAYAVDQLGDIVFVGLPEEGTEIEKGESFGSVESVKAVEDLYAPVSGKVVAVNKAVVDSPESIADDPYGDGWLIKVRMTNPEDLDDTMSAEAYASLVEGS.

The region spanning 24-106 (IAVIGITAYA…YGDGWLIKVR (83 aa)) is the Lipoyl-binding domain. At K65 the chain carries N6-lipoyllysine.

Belongs to the GcvH family. The glycine cleavage system is composed of four proteins: P, T, L and H. (R)-lipoate is required as a cofactor.

Functionally, the glycine cleavage system catalyzes the degradation of glycine. The H protein shuttles the methylamine group of glycine from the P protein to the T protein. This chain is Glycine cleavage system H protein, found in Synechococcus sp. (strain JA-3-3Ab) (Cyanobacteria bacterium Yellowstone A-Prime).